Consider the following 341-residue polypeptide: Transcription factor JunD (341 aa).

The disordered stretch occupies residues 21–49 (VAGAAGAPGGGGFAPPGRAFPGAPPTSSM). A Menin-binding motif (MBM) motif is present at residues 35-47 (PPGRAFPGAPPTS). An MAP kinase docking motif; essential for its phosphorylation motif is present at residues 51–60 (KKDALTLSLA). Residues 65 to 85 (AGLKPGSATAPSALRPDGAPD) are disordered. At Ser90 the chain carries Phosphoserine. At Ser100 the chain carries Phosphoserine; by MAPK8. Thr117 is modified (phosphothreonine). The segment at 155 to 176 (AATAATSGAPAPPAPADLAATP) is disordered. Phosphoserine occurs at positions 245, 249, and 253. The basic motif stretch occupies residues 262-289 (RIKAERKRLRNRIAASKCRKRKLERISR). Residues 262-325 (RIKAERKRLR…AQLKQKVLSH (64 aa)) enclose the bZIP domain. The segment at 290-318 (LEEKVKTLKSQNTELASTASLLREQVAQL) is leucine-zipper.

This sequence belongs to the bZIP family. Jun subfamily. Heterodimer; binds DNA as a heterodimer. Component of an AP-1 transcription factor complex composed of JUN-FOS heterodimers. As part of the AP-1 transcription factor complex, forms heterodimers with FOS proteins, thereby binding to the AP-1 consensus sequence and stimulating transcription. Forms heterodimers with FOSB; thereby binding to the AP-1 consensus sequence. Interacts (via MBM motif) with MEN1; this interaction represses transcriptional activation. Interacts with MAPK10; this interaction is inhibited in the presence of MEN1. Phosphorylated by MAP kinases MAPK8 and MAPK10; phosphorylation is inhibited in the presence of MEN1.

It is found in the nucleus. In terms of biological role, transcription factor binding AP-1 sites. Heterodimerizes with proteins of the FOS family to form an AP-1 transcription factor complex, thereby enhancing their DNA binding activity to an AP-1 consensus sequence 3'-TGA[GC]TCA-5' and enhancing their transcriptional activity. The sequence is that of Transcription factor JunD (Jund) from Rattus norvegicus (Rat).